The sequence spans 217 residues: Adenylate kinase (217 aa).

10 to 15 provides a ligand contact to ATP; it reads GAGKGT. The tract at residues 30–59 is NMP; sequence STGDMFRAAMKEETDLGLEAKSYIDKGELV. AMP is bound by residues Thr-31, Arg-36, 57-59, 85-88, and Gln-92; these read ELV and GFPR. Positions 126 to 163 are LID; the sequence is GRRICKNCGATYHLVFNPPAKENVCDKCGGELYQREDD. Arg-127 provides a ligand contact to ATP. Residues Cys-130 and Cys-133 each contribute to the Zn(2+) site. 136–137 provides a ligand contact to ATP; it reads TY. Zn(2+) is bound by residues Cys-150 and Cys-153. AMP contacts are provided by Arg-160 and Arg-171. Lys-199 contacts ATP.

It belongs to the adenylate kinase family. In terms of assembly, monomer.

The protein localises to the cytoplasm. It carries out the reaction AMP + ATP = 2 ADP. It participates in purine metabolism; AMP biosynthesis via salvage pathway; AMP from ADP: step 1/1. Functionally, catalyzes the reversible transfer of the terminal phosphate group between ATP and AMP. Plays an important role in cellular energy homeostasis and in adenine nucleotide metabolism. This Bacillus licheniformis (strain ATCC 14580 / DSM 13 / JCM 2505 / CCUG 7422 / NBRC 12200 / NCIMB 9375 / NCTC 10341 / NRRL NRS-1264 / Gibson 46) protein is Adenylate kinase.